A 440-amino-acid polypeptide reads, in one-letter code: Thymidine phosphorylase (440 aa).

It belongs to the thymidine/pyrimidine-nucleoside phosphorylase family. In terms of assembly, homodimer.

The enzyme catalyses thymidine + phosphate = 2-deoxy-alpha-D-ribose 1-phosphate + thymine. The protein operates within pyrimidine metabolism; dTMP biosynthesis via salvage pathway; dTMP from thymine: step 1/2. Its function is as follows. The enzymes which catalyze the reversible phosphorolysis of pyrimidine nucleosides are involved in the degradation of these compounds and in their utilization as carbon and energy sources, or in the rescue of pyrimidine bases for nucleotide synthesis. The polypeptide is Thymidine phosphorylase (Rhizobium meliloti (strain 1021) (Ensifer meliloti)).